We begin with the raw amino-acid sequence, 182 residues long: ATP synthase subunit delta (182 aa).

Belongs to the ATPase delta chain family. F-type ATPases have 2 components, F(1) - the catalytic core - and F(0) - the membrane proton channel. F(1) has five subunits: alpha(3), beta(3), gamma(1), delta(1), epsilon(1). F(0) has three main subunits: a(1), b(2) and c(10-14). The alpha and beta chains form an alternating ring which encloses part of the gamma chain. F(1) is attached to F(0) by a central stalk formed by the gamma and epsilon chains, while a peripheral stalk is formed by the delta and b chains.

It is found in the cell membrane. Its function is as follows. F(1)F(0) ATP synthase produces ATP from ADP in the presence of a proton or sodium gradient. F-type ATPases consist of two structural domains, F(1) containing the extramembraneous catalytic core and F(0) containing the membrane proton channel, linked together by a central stalk and a peripheral stalk. During catalysis, ATP synthesis in the catalytic domain of F(1) is coupled via a rotary mechanism of the central stalk subunits to proton translocation. Functionally, this protein is part of the stalk that links CF(0) to CF(1). It either transmits conformational changes from CF(0) to CF(1) or is implicated in proton conduction. The protein is ATP synthase subunit delta of Lactobacillus gasseri (strain ATCC 33323 / DSM 20243 / BCRC 14619 / CIP 102991 / JCM 1131 / KCTC 3163 / NCIMB 11718 / NCTC 13722 / AM63).